We begin with the raw amino-acid sequence, 513 residues long: MQLNPSEISELIKAKIENLGASSELRTQGTIVSVTDGIVRIHGLSDVMSGEMIEMPGNTFGVALNLERDSVGAVILGDYEHIKEGDVAKCTGRILEVPVGRGLLGRVVNSLGQPIDGKGPIAADSSMPIERIAPGVIERKSVDQPVQTGLKSIDAMVPVGRGQRELIIGDRQTGKTAVAIDAIINQKGTGVKCIYVAVGQKASSVANVVRKLEEHGAMEHTIVVAATASDAAAMQYIAPYSGCTMGEYFRDIGEDALIVYDDLTKQAWAYRQVSLLLRRPPGREAYPGDVFYLHSRLLERAARVNADYVEKLTGGAVKGKTGSLTALPIIETQAGDVSAFVPTNVISITDGQIFLETDLFNAGIRPAINAGLSVSRVGGAAQTKVVKKLGGGVRLALAQYRELAAFAQFASDLDEATRKQLERGRRVTELMKQAQYSPMSVSQMALTLFAVNNGYMDEVEVNKILAFEAALQAFMKSKYAAIMDTIETSGNLDGETEKALTAAVEEFKKTGVY.

Residue 169-176 (GDRQTGKT) coordinates ATP.

It belongs to the ATPase alpha/beta chains family. F-type ATPases have 2 components, CF(1) - the catalytic core - and CF(0) - the membrane proton channel. CF(1) has five subunits: alpha(3), beta(3), gamma(1), delta(1), epsilon(1). CF(0) has three main subunits: a(1), b(2) and c(9-12). The alpha and beta chains form an alternating ring which encloses part of the gamma chain. CF(1) is attached to CF(0) by a central stalk formed by the gamma and epsilon chains, while a peripheral stalk is formed by the delta and b chains.

It localises to the cell inner membrane. The catalysed reaction is ATP + H2O + 4 H(+)(in) = ADP + phosphate + 5 H(+)(out). In terms of biological role, produces ATP from ADP in the presence of a proton gradient across the membrane. The alpha chain is a regulatory subunit. This chain is ATP synthase subunit alpha, found in Thiobacillus denitrificans (strain ATCC 25259 / T1).